We begin with the raw amino-acid sequence, 310 residues long: Olfactory receptor 8G3 (310 aa).

Residues 1–25 are Extracellular-facing; the sequence is MDPGNHSSVTESILAGLSEQPELQL. Asparagine 5 carries N-linked (GlcNAc...) asparagine glycosylation. A helical transmembrane segment spans residues 26–46; it reads RLFLLFLGICVVTVVGNLGMI. At 47 to 54 the chain is on the cytoplasmic side; that stretch reads TLIGLSSH. The helical transmembrane segment at 55–75 threads the bilayer; sequence LHTPMYYFLSSLSFIDFCHST. The Extracellular segment spans residues 76–99; the sequence is VITPKMLVNFATEKNIISYPECMA. A disulfide bridge links cysteine 97 with cysteine 189. The chain crosses the membrane as a helical span at residues 100 to 120; the sequence is QLYLFSIFAIAECHMLAAMAY. Residues 121–139 are Cytoplasmic-facing; the sequence is DCYVAICSPLLYNVIMSYH. A helical transmembrane segment spans residues 140–160; the sequence is HCFWLTVGVYILGILGSTIHT. Residues 161–197 lie on the Extracellular side of the membrane; it reads SFMLRLFLCKTNVINHYFCDLFPLLGLSCSSTYINEL. Residues 198–217 form a helical membrane-spanning segment; sequence LVLVLSAFNILMPALTILAS. Topologically, residues 218 to 237 are cytoplasmic; it reads YIFIIASILRIHSTEGRSKA. The helical transmembrane segment at 238–258 threads the bilayer; that stretch reads FSTCSSHILAVAVFFGSAAFM. The Extracellular portion of the chain corresponds to 259 to 271; it reads YLQPSSVSSMDQR. Residues 272–292 traverse the membrane as a helical segment; sequence KVSSVFYTTIVPMLNPLIYSL. The Cytoplasmic segment spans residues 293–310; sequence RNKDVKLAVKKILHQTAC.

The protein belongs to the G-protein coupled receptor 1 family.

The protein resides in the cell membrane. Its function is as follows. Odorant receptor. This is Olfactory receptor 8G3 from Homo sapiens (Human).